Consider the following 229-residue polypeptide: Enolase-phosphatase E1 (229 aa).

The protein belongs to the HAD-like hydrolase superfamily. MasA/MtnC family. In terms of assembly, monomer. Mg(2+) is required as a cofactor.

The catalysed reaction is 5-methylsulfanyl-2,3-dioxopentyl phosphate + H2O = 1,2-dihydroxy-5-(methylsulfanyl)pent-1-en-3-one + phosphate. Its pathway is amino-acid biosynthesis; L-methionine biosynthesis via salvage pathway; L-methionine from S-methyl-5-thio-alpha-D-ribose 1-phosphate: step 3/6. It functions in the pathway amino-acid biosynthesis; L-methionine biosynthesis via salvage pathway; L-methionine from S-methyl-5-thio-alpha-D-ribose 1-phosphate: step 4/6. Bifunctional enzyme that catalyzes the enolization of 2,3-diketo-5-methylthiopentyl-1-phosphate (DK-MTP-1-P) into the intermediate 2-hydroxy-3-keto-5-methylthiopentenyl-1-phosphate (HK-MTPenyl-1-P), which is then dephosphorylated to form the acireductone 1,2-dihydroxy-3-keto-5-methylthiopentene (DHK-MTPene). This is Enolase-phosphatase E1 from Enterobacter sp. (strain 638).